The chain runs to 299 residues: Bifunctional protein FolD (299 aa).

NADP(+) is bound by residues 168–170 (GRS), Ser193, and Ile234.

Belongs to the tetrahydrofolate dehydrogenase/cyclohydrolase family. In terms of assembly, homodimer.

It carries out the reaction (6R)-5,10-methylene-5,6,7,8-tetrahydrofolate + NADP(+) = (6R)-5,10-methenyltetrahydrofolate + NADPH. The enzyme catalyses (6R)-5,10-methenyltetrahydrofolate + H2O = (6R)-10-formyltetrahydrofolate + H(+). The protein operates within one-carbon metabolism; tetrahydrofolate interconversion. Catalyzes the oxidation of 5,10-methylenetetrahydrofolate to 5,10-methenyltetrahydrofolate and then the hydrolysis of 5,10-methenyltetrahydrofolate to 10-formyltetrahydrofolate. This chain is Bifunctional protein FolD, found in Bartonella henselae (strain ATCC 49882 / DSM 28221 / CCUG 30454 / Houston 1) (Rochalimaea henselae).